The following is a 128-amino-acid chain: Glycine cleavage system H protein (128 aa).

A Lipoyl-binding domain is found at Ser-24 to Lys-105. Lys-65 carries the N6-lipoyllysine modification.

This sequence belongs to the GcvH family. In terms of assembly, the glycine cleavage system is composed of four proteins: P, T, L and H. (R)-lipoate serves as cofactor.

In terms of biological role, the glycine cleavage system catalyzes the degradation of glycine. The H protein shuttles the methylamine group of glycine from the P protein to the T protein. In Aromatoleum aromaticum (strain DSM 19018 / LMG 30748 / EbN1) (Azoarcus sp. (strain EbN1)), this protein is Glycine cleavage system H protein.